The following is a 400-amino-acid chain: Nicotinate phosphoribosyltransferase (400 aa).

His220 is subject to Phosphohistidine; by autocatalysis.

The protein belongs to the NAPRTase family. Post-translationally, transiently phosphorylated on a His residue during the reaction cycle. Phosphorylation strongly increases the affinity for substrates and increases the rate of nicotinate D-ribonucleotide production. Dephosphorylation regenerates the low-affinity form of the enzyme, leading to product release.

It carries out the reaction nicotinate + 5-phospho-alpha-D-ribose 1-diphosphate + ATP + H2O = nicotinate beta-D-ribonucleotide + ADP + phosphate + diphosphate. Its pathway is cofactor biosynthesis; NAD(+) biosynthesis; nicotinate D-ribonucleotide from nicotinate: step 1/1. Catalyzes the synthesis of beta-nicotinate D-ribonucleotide from nicotinate and 5-phospho-D-ribose 1-phosphate at the expense of ATP. The sequence is that of Nicotinate phosphoribosyltransferase from Salmonella dublin (strain CT_02021853).